Here is a 450-residue protein sequence, read N- to C-terminus: Calcium-binding and coiled-coil domain-containing protein 2 (450 aa).

The short motif at 133-136 (ILVV) is the CLIR element. Residues 135 to 349 (VVTTQSEVEE…RENNRLLSYM (215 aa)) are a coiled coil. The LIR-like motif lies at 203 to 206 (DCWE). An interaction with LGALS8 region spans residues 371-381 (DPGLVFGNPYS). The interaction with MYO6 stretch occupies residues 395–450 (KKCPTCKSDFAADVFDHNLALEQHLQTLSLNCPICDKTFPAKEKQIFEDHVFCHTL). A UBZ1-type zinc finger spans residues 423–448 (SLNCPICDKTFPAKEKQIFEDHVFCH). Residues cysteine 426, cysteine 429, histidine 444, and histidine 448 each contribute to the Zn(2+) site.

It belongs to the CALCOCO family. In terms of assembly, dimer. Part of a complex consisting of CALCOCO2, TAX1BP1 and MYO6. Interacts with GEMIN4. Interacts with ATG8 family members MAP1LC3A, MAP1LC3B, GABARAP, GABARAPL1 and GABARAPL2. Interacts with ATG8 family member MAP1LC3C. Interacts with LGALS8. Interacts with TOM1; the interaction is indirect and is mediated by MYO6, which acts as a bridge between TOM1 and CALCOCO2. Interacts with AZI2.

The protein resides in the cytoplasm. Its subcellular location is the perinuclear region. It localises to the cytoskeleton. It is found in the cytoplasmic vesicle. The protein localises to the autophagosome membrane. Its function is as follows. Xenophagy-specific receptor required for autophagy-mediated intracellular bacteria degradation. Acts as an effector protein of galectin-sensed membrane damage that restricts the proliferation of infecting pathogens upon entry into the cytosol by targeting LGALS8-associated bacteria for autophagy. Initially orchestrates bacteria targeting to autophagosomes and subsequently ensures pathogen degradation by regulating pathogen-containing autophagosome maturation. Bacteria targeting to autophagosomes relies on its interaction with MAP1LC3A, MAP1LC3B and/or GABARAPL2, whereas regulation of pathogen-containing autophagosome maturation requires the interaction with MAP3LC3C. May play a role in ruffle formation and actin cytoskeleton organization and seems to negatively regulate constitutive secretion. The chain is Calcium-binding and coiled-coil domain-containing protein 2 from Bos taurus (Bovine).